We begin with the raw amino-acid sequence, 272 residues long: Rhomboid-type serine protease B (272 aa).

The next 6 membrane-spanning stretches (helical) occupy residues 30 to 50, 72 to 92, 103 to 123, 133 to 153, 164 to 184, and 186 to 206; these read LVLL…WSVV, PFIH…TPLL, TAVA…YILV, AVVG…IKTF, TKIP…IFVP, and TSFL…LGYL. The Nucleophile role is filled by serine 138. Residue histidine 191 is part of the active site.

This sequence belongs to the peptidase S54 family.

The protein resides in the membrane. The enzyme catalyses Cleaves type-1 transmembrane domains using a catalytic dyad composed of serine and histidine that are contributed by different transmembrane domains.. Rhomboid protease that catalyzes intramembrane proteolysis. Required for transcription factor srbA activation by mediating its release from the membrane and thereby regulating its activity under hypoxic conditions. Essential for iron homeostasis and resistance to azoles such as voriconazole. Required for virulence in murine models of invasive pulmonary aspergillosis (IPA). This is Rhomboid-type serine protease B from Aspergillus fumigatus (strain ATCC MYA-4609 / CBS 101355 / FGSC A1100 / Af293) (Neosartorya fumigata).